The chain runs to 283 residues: NAD kinase (283 aa).

Asp67 serves as the catalytic Proton acceptor. NAD(+)-binding positions include 67–68 (DG), 141–142 (ND), Arg152, Asp171, 182–187 (TAYSLS), and Gln241.

It belongs to the NAD kinase family. It depends on a divalent metal cation as a cofactor.

It is found in the cytoplasm. It carries out the reaction NAD(+) + ATP = ADP + NADP(+) + H(+). Functionally, involved in the regulation of the intracellular balance of NAD and NADP, and is a key enzyme in the biosynthesis of NADP. Catalyzes specifically the phosphorylation on 2'-hydroxyl of the adenosine moiety of NAD to yield NADP. The chain is NAD kinase from Heliobacterium modesticaldum (strain ATCC 51547 / Ice1).